Here is a 301-residue protein sequence, read N- to C-terminus: GTPase Era (301 aa).

The region spanning 7–175 (YCGFIAIVGR…AGIVRKHLPE (169 aa)) is the Era-type G domain. The segment at 15-22 (GRPNVGKS) is G1. 15–22 (GRPNVGKS) contributes to the GTP binding site. The interval 41 to 45 (QTTRH) is G2. The tract at residues 62-65 (DTPG) is G3. GTP is bound by residues 62–66 (DTPGL) and 124–127 (NKVD). The G4 stretch occupies residues 124-127 (NKVD). The segment at 154-156 (LSA) is G5. The 86-residue stretch at 198–283 (IREKLMRFLG…HLELWVKVKS (86 aa)) folds into the KH type-2 domain.

This sequence belongs to the TRAFAC class TrmE-Era-EngA-EngB-Septin-like GTPase superfamily. Era GTPase family. As to quaternary structure, monomer.

The protein resides in the cytoplasm. Its subcellular location is the cell inner membrane. An essential GTPase that binds both GDP and GTP, with rapid nucleotide exchange. Plays a role in 16S rRNA processing and 30S ribosomal subunit biogenesis and possibly also in cell cycle regulation and energy metabolism. The polypeptide is GTPase Era (Enterobacter sp. (strain 638)).